A 780-amino-acid chain; its full sequence is Zinc finger protein GLIS3 (780 aa).

Composition is skewed to polar residues over residues 80-92 and 106-115; these read PSLS…QNGT and VSGNSVSNSL. Disordered regions lie at residues 80–148 and 290–315; these read PSLS…KKRA and PSAL…HLHH. Basic residues predominate over residues 135 to 148; sequence SATRAHSTRSKKRA. The segment covering 293-308 has biased composition (pro residues); sequence LPLPLPPPQGPPPPYH. The segment at 345–370 adopts a C2H2-type 1 zinc-finger fold; it reads HCCRWIDCSALYDQQEELVRHIEKVH. The C2H2-type 2; atypical zinc finger occupies 379-406; the sequence is FTCFWTGCPRRYKPFNARYKLLIHMRVH. 3 consecutive C2H2-type zinc fingers follow at residues 412–436, 442–466, and 472–496; these read NKCT…LRSH, YLCQ…QRTH, and YACQ…VKAH. Disordered stretches follow at residues 485–512 and 527–670; these read DPSS…SSTE and LQPA…QPNG. Residues 490 to 506 carry the Bipartite nuclear localization signal motif; the sequence is RKHVKAHSSREQQARKK. A compositionally biased stretch (basic and acidic residues) spans 497–512; that stretch reads SSREQQARKKLRSSTE. Positions 567 to 577 are enriched in low complexity; that stretch reads HSTRSGTAAGA. The segment covering 593 to 605 has biased composition (polar residues); the sequence is VQGSPHNPSSQLP.

Belongs to the GLI C2H2-type zinc-finger protein family. In the embryo, expressed at high levels in the kidney and testis. In the adult, expressed at high levels in the kidney and uterus and at lower levels in the brain, lung, skeletal muscle and pancreas.

The protein localises to the nucleus. Functionally, acts both as a repressor and activator of transcription. Binds to the consensus sequence 5'-GACCACCCAC-3'. The sequence is that of Zinc finger protein GLIS3 from Mus musculus (Mouse).